We begin with the raw amino-acid sequence, 540 residues long: 2,3-bisphosphoglycerate-independent phosphoglycerate mutase (540 aa).

Mn(2+)-binding residues include D13 and S63. The Phosphoserine intermediate role is filled by S63. Residues H124, 154 to 155, R186, R192, 262 to 265, and K356 each bind substrate; these read RD and RPDR. Residues D423, H427, D464, H465, and H483 each contribute to the Mn(2+) site.

This sequence belongs to the BPG-independent phosphoglycerate mutase family. In terms of assembly, monomer. It depends on Mn(2+) as a cofactor.

The catalysed reaction is (2R)-2-phosphoglycerate = (2R)-3-phosphoglycerate. It participates in carbohydrate degradation; glycolysis; pyruvate from D-glyceraldehyde 3-phosphate: step 3/5. Functionally, catalyzes the interconversion of 2-phosphoglycerate and 3-phosphoglycerate. The protein is 2,3-bisphosphoglycerate-independent phosphoglycerate mutase of Chloroflexus aurantiacus (strain ATCC 29366 / DSM 635 / J-10-fl).